Here is a 290-residue protein sequence, read N- to C-terminus: Arylamine N-acetyltransferase 1 (290 aa).

N-acetylmethionine is present on Met-1. Cys-68 (acyl-thioester intermediate) is an active-site residue. A CoA-binding site is contributed by Ser-103. Residue 106-107 (IH) coordinates substrate. Residues His-107 and Asp-122 contribute to the active site. CoA-binding residues include Tyr-208 and Ser-287.

Belongs to the arylamine N-acetyltransferase family.

The protein resides in the cytoplasm. It catalyses the reaction an arylamine + acetyl-CoA = an N-acetylarylamine + CoA. In terms of biological role, participates in the detoxification of a plethora of hydrazine and arylamine drugs. The chain is Arylamine N-acetyltransferase 1 (NAT1) from Mesocricetus auratus (Golden hamster).